The following is a 466-amino-acid chain: ATP synthase subunit beta (466 aa).

148 to 155 (GGAGVGKT) lines the ATP pocket.

The protein belongs to the ATPase alpha/beta chains family. As to quaternary structure, F-type ATPases have 2 components, CF(1) - the catalytic core - and CF(0) - the membrane proton channel. CF(1) has five subunits: alpha(3), beta(3), gamma(1), delta(1), epsilon(1). CF(0) has three main subunits: a(1), b(2) and c(9-12). The alpha and beta chains form an alternating ring which encloses part of the gamma chain. CF(1) is attached to CF(0) by a central stalk formed by the gamma and epsilon chains, while a peripheral stalk is formed by the delta and b chains.

The protein resides in the cell inner membrane. The catalysed reaction is ATP + H2O + 4 H(+)(in) = ADP + phosphate + 5 H(+)(out). Functionally, produces ATP from ADP in the presence of a proton gradient across the membrane. The catalytic sites are hosted primarily by the beta subunits. This Xylella fastidiosa (strain M23) protein is ATP synthase subunit beta.